Consider the following 740-residue polypeptide: ATP-dependent RNA helicase DDX1 (740 aa).

Residues 1 to 295 form a necessary for interaction with HNRNPK region; sequence MAAFSEMGVM…APKALIVEPS (295 aa). The tract at residues 1–448 is interaction with dsRNA; the sequence is MAAFSEMGVM…DTVHHVVVPV (448 aa). The necessary for interaction with RELA stretch occupies residues 1–525; the sequence is MAAFSEMGVM…KIDCDNLEQY (525 aa). The 427-residue stretch at 2–428 folds into the Helicase ATP-binding domain; it reads AAFSEMGVMP…SEKIMHFPTW (427 aa). 46–53 is an ATP binding site; sequence AETGSGKT. In terms of domain architecture, B30.2/SPRY spans 70 to 247; it reads DQQEGKKGKA…LKFNFGEEEF (178 aa). An N6-acetyllysine mark is found at Lys239 and Lys268. Lys281 carries the N6-acetyllysine; alternate modification. A Glycyl lysine isopeptide (Lys-Gly) (interchain with G-Cter in SUMO2); alternate cross-link involves residue Lys281. Positions 370-373 match the DEAD box motif; that stretch reads DEAD. Ser481 is subject to Phosphoserine. In terms of domain architecture, Helicase C-terminal spans 493-681; it reads KGEYAVRAIK…QVEPDIKVPV (189 aa). The tract at residues 525–740 is necessary for interaction with HNRNPK; it reads YFMQQGGGPD…YLPNQLFRTF (216 aa).

Belongs to the DEAD box helicase family. DDX1 subfamily. As to quaternary structure, found in a multi-helicase-TICAM1 complex at least composed of DHX36, DDX1, DDX21 and TICAM1; this complex exists in resting cells with or without poly(I:C) RNA ligand stimulation. Interacts with DHX36. Interacts (via B30.2/SPRY domain) with DDX21 (via N-terminus); this interaction serves as bridges to TICAM1. Interacts with FAM98A (via N- and C-terminus). Interacts with PHF5A (via C-terminus). Interacts with MBNL1. Interacts with CSTF2. Interacts with HNRNPK. Interacts with ATM. Interacts with RELA (via C-terminus). Component of the tRNA-splicing ligase complex. Interacts with PQBP1. Interacts with ERCC6. Post-translationally, phosphorylated by ATM kinase; phosphorylation is increased in response to ionizing radiation (IR).

It is found in the nucleus. The protein localises to the cytoplasm. Its subcellular location is the cytoplasmic granule. It localises to the cytosol. The protein resides in the mitochondrion. It carries out the reaction ATP + H2O = ADP + phosphate + H(+). Acts as an ATP-dependent RNA helicase, able to unwind both RNA-RNA and RNA-DNA duplexes. Possesses 5' single-stranded RNA overhang nuclease activity. Possesses ATPase activity on various RNA, but not DNA polynucleotides. May play a role in RNA clearance at DNA double-strand breaks (DSBs), thereby facilitating the template-guided repair of transcriptionally active regions of the genome. Together with RELA, acts as a coactivator to enhance NF-kappa-B-mediated transcriptional activation. Acts as a positive transcriptional regulator of cyclin CCND2 expression. Binds to the cyclin CCND2 promoter region. Associates with chromatin at the NF-kappa-B promoter region via association with RELA. Binds to poly(A) RNA. May be involved in 3'-end cleavage and polyadenylation of pre-mRNAs. Component of the tRNA-splicing ligase complex required to facilitate the enzymatic turnover of catalytic subunit RTCB: together with archease (ZBTB8OS), acts by facilitating the guanylylation of RTCB, a key intermediate step in tRNA ligation. Component of a multi-helicase-TICAM1 complex that acts as a cytoplasmic sensor of viral double-stranded RNA (dsRNA) and plays a role in the activation of a cascade of antiviral responses including the induction of pro-inflammatory cytokines via the adapter molecule TICAM1. Specifically binds (via helicase ATP-binding domain) on both short and long poly(I:C) dsRNA. The sequence is that of ATP-dependent RNA helicase DDX1 (Ddx1) from Rattus norvegicus (Rat).